The chain runs to 591 residues: CDK5RAP3 protein homolog (591 aa).

A compositionally biased stretch (low complexity) spans Arg-232–Pro-250. 2 disordered regions span residues Arg-232 to Leu-252 and Thr-269 to Gly-303. Residues Ala-279 to Gly-303 show a composition bias toward gly residues. Short sequence motifs (shuffled ATG8-binding motif) lie at residues Ile-311 to Asp-314, Ile-334 to Asp-337, and Ile-369 to Asp-372. Positions Asn-386 to Leu-401 are enriched in low complexity. Residues Asn-386 to Asp-416 are disordered.

It belongs to the CDK5RAP3 family. As to quaternary structure, substrate adapter component of the UFM1 ribosome E3 ligase (UREL) complex. Interacts with ATG8 family proteins.

Substrate adapter of E3 ligase complexes mediating ufmylation, the covalent attachment of the ubiquitin-like modifier UFM1 to substrate proteins, and which is involved in various processes, such as ribosome recycling and reticulophagy (also called ER-phagy). In Chlamydomonas reinhardtii (Chlamydomonas smithii), this protein is CDK5RAP3 protein homolog.